Reading from the N-terminus, the 291-residue chain is Probable L-ascorbate peroxidase 3, peroxisomal (291 aa).

His41 serves as the catalytic Proton acceptor. A disordered region spans residues 114–133 (YVPGRRDSSDSPEEGRLPDA). Positions 116-133 (PGRRDSSDSPEEGRLPDA) are enriched in basic and acidic residues. His161 is a binding site for heme b. K(+)-binding residues include Thr162, Thr178, and Asp185. Residues 263–283 (LLMQTAAGVAVAAAVVAWAYL) form a helical membrane-spanning segment.

Belongs to the peroxidase family. Ascorbate peroxidase subfamily. Heme b is required as a cofactor. Expressed in stems.

The protein resides in the peroxisome membrane. It catalyses the reaction L-ascorbate + H2O2 = L-dehydroascorbate + 2 H2O. Functionally, plays a key role in hydrogen peroxide removal. The sequence is that of Probable L-ascorbate peroxidase 3, peroxisomal from Oryza sativa subsp. japonica (Rice).